A 101-amino-acid polypeptide reads, in one-letter code: Phosphoribosyl-AMP cyclohydrolase (101 aa).

Asp-71 provides a ligand contact to Mg(2+). Cys-72 lines the Zn(2+) pocket. Residues Asp-73 and Asp-75 each contribute to the Mg(2+) site. Residues Cys-88 and Cys-95 each contribute to the Zn(2+) site.

Belongs to the PRA-CH family. Homodimer. Mg(2+) serves as cofactor. Requires Zn(2+) as cofactor.

Its subcellular location is the cytoplasm. It catalyses the reaction 1-(5-phospho-beta-D-ribosyl)-5'-AMP + H2O = 1-(5-phospho-beta-D-ribosyl)-5-[(5-phospho-beta-D-ribosylamino)methylideneamino]imidazole-4-carboxamide. It participates in amino-acid biosynthesis; L-histidine biosynthesis; L-histidine from 5-phospho-alpha-D-ribose 1-diphosphate: step 3/9. In terms of biological role, catalyzes the hydrolysis of the adenine ring of phosphoribosyl-AMP. The polypeptide is Phosphoribosyl-AMP cyclohydrolase (Bacillus cereus (strain Q1)).